A 715-amino-acid chain; its full sequence is ATP-dependent zinc metalloprotease FtsH (715 aa).

Residues 1-10 lie on the Cytoplasmic side of the membrane; that stretch reads MKNKNRGFFR. Residues 11 to 31 form a helical membrane-spanning segment; it reads SSLSYAFVILAVIFLIYSFFG. The Extracellular segment spans residues 32–137; the sequence is RSDGSVKHLS…KPAASNFWGS (106 aa). The chain crosses the membrane as a helical span at residues 138-158; sequence MLTLILPTLIMFALLYWMLIG. Residues 159–715 lie on the Cytoplasmic side of the membrane; that stretch reads SQRGQGGSGG…LLDAVNNKFD (557 aa). The tract at residues 167–187 is disordered; it reads GGPGGIMSFGRSKAKPADPKQ. Residue 233–240 coordinates ATP; that stretch reads GPPGTGKT. Position 455 (H455) interacts with Zn(2+). Residue E456 is part of the active site. Zn(2+) contacts are provided by H459 and D531.

The protein in the central section; belongs to the AAA ATPase family. In the C-terminal section; belongs to the peptidase M41 family. Homohexamer. Requires Zn(2+) as cofactor.

It localises to the cell membrane. Its function is as follows. Acts as a processive, ATP-dependent zinc metallopeptidase for both cytoplasmic and membrane proteins. Plays a role in the quality control of integral membrane proteins. Functionally, can complement an E.coli ftsH disruption mutant. This is ATP-dependent zinc metalloprotease FtsH from Oenococcus oeni (Leuconostoc oenos).